The sequence spans 291 residues: Small ribosomal subunit protein uS2 (291 aa).

The protein belongs to the universal ribosomal protein uS2 family.

The sequence is that of Small ribosomal subunit protein uS2 from Orientia tsutsugamushi (strain Boryong) (Rickettsia tsutsugamushi).